A 407-amino-acid polypeptide reads, in one-letter code: Peptidase T (407 aa).

His-82 is a Zn(2+) binding site. Asp-84 is a catalytic residue. Asp-143 contributes to the Zn(2+) binding site. Catalysis depends on Glu-177, which acts as the Proton acceptor. Zn(2+) is bound by residues Glu-178, Asp-200, and His-382.

Belongs to the peptidase M20B family. Zn(2+) serves as cofactor.

The protein localises to the cytoplasm. It carries out the reaction Release of the N-terminal residue from a tripeptide.. Its function is as follows. Cleaves the N-terminal amino acid of tripeptides. The polypeptide is Peptidase T (Streptococcus pyogenes serotype M12 (strain MGAS2096)).